The following is a 545-amino-acid chain: Cytochrome P450 10 (545 aa).

Position 493 (Cys-493) interacts with heme.

The protein belongs to the cytochrome P450 family. Heme serves as cofactor. In terms of tissue distribution, abundantly expressed in the female gonadotropic hormone producing dorsal bodies.

Functionally, may be involved in the synthesis of the female gonadotropic hormone produced by the dorsal bodies. This chain is Cytochrome P450 10 (CYP10), found in Lymnaea stagnalis (Great pond snail).